An 80-amino-acid polypeptide reads, in one-letter code: Photosystem II extrinsic protein V (80 aa).

Position 47 (methionine 47) interacts with heme.

The protein belongs to the cytochrome c family. PsbV subfamily. PSII is composed of 1 copy each of membrane proteins PsbA, PsbB, PsbC, PsbD, PsbE, PsbF, PsbH, PsbI, PsbJ, PsbK, PsbL, PsbM, PsbT, PsbY, PsbZ, Psb30/Ycf12, at least 3 peripheral proteins of the oxygen-evolving complex and a large number of cofactors. It forms dimeric complexes. Heme is required as a cofactor.

The protein resides in the plastid. It localises to the chloroplast thylakoid membrane. Its function is as follows. One of the extrinsic, lumenal subunits of photosystem II (PSII). PSII is a light-driven water plastoquinone oxidoreductase, using light energy to abstract electrons from H(2)O, generating a proton gradient subsequently used for ATP formation. The extrinsic proteins stabilize the structure of photosystem II oxygen-evolving complex (OEC), the ion environment of oxygen evolution and protect the OEC against heat-induced inactivation. The protein is Photosystem II extrinsic protein V of Thalassiosira weissflogii (Marine diatom).